We begin with the raw amino-acid sequence, 274 residues long: Large ribosomal subunit protein uL2 (274 aa).

A disordered region spans residues 221–274 (RGTAMNPVDHPHGGGEGRNFGKHPVTPWGVQTKGKKTRNNKRTDKSIVRRRSKK).

This sequence belongs to the universal ribosomal protein uL2 family. Part of the 50S ribosomal subunit. Forms a bridge to the 30S subunit in the 70S ribosome.

Functionally, one of the primary rRNA binding proteins. Required for association of the 30S and 50S subunits to form the 70S ribosome, for tRNA binding and peptide bond formation. It has been suggested to have peptidyltransferase activity; this is somewhat controversial. Makes several contacts with the 16S rRNA in the 70S ribosome. This is Large ribosomal subunit protein uL2 from Hamiltonella defensa subsp. Acyrthosiphon pisum (strain 5AT).